Reading from the N-terminus, the 918-residue chain is Sarcosine dehydrogenase, mitochondrial (918 aa).

The segment covering 1 to 13 has biased composition (low complexity); sequence MASLSRALRVAAA. The transit peptide at 1–22 directs the protein to the mitochondrion; that stretch reads MASLSRALRVAAAHPRQSPTRG. Residues 1 to 40 are disordered; the sequence is MASLSRALRVAAAHPRQSPTRGMGPCNLSSAAGPTAEKSV. An N6-succinyllysine modification is found at Lys38. Position 108 is a tele-8alpha-FAD histidine (His108). N6-acetyllysine; alternate is present on Lys173. The residue at position 173 (Lys173) is an N6-succinyllysine; alternate. 2 positions are modified to N6-succinyllysine: Lys377 and Lys391. N6-acetyllysine occurs at positions 559 and 775. Phosphotyrosine is present on Tyr777. N6-acetyllysine; alternate occurs at positions 802, 884, and 904. 3 positions are modified to N6-succinyllysine; alternate: Lys802, Lys884, and Lys904.

It belongs to the GcvT family. It depends on FAD as a cofactor. As to expression, expressed in pancreas, liver and kidney.

The protein resides in the mitochondrion matrix. The enzyme catalyses (6S)-5,6,7,8-tetrahydrofolyl-(gamma-L-Glu)(n) + sarcosine + oxidized [electron-transfer flavoprotein] + H(+) = (6R)-5,10-methylenetetrahydrofolyl-(gamma-L-Glu)(n) + reduced [electron-transfer flavoprotein] + glycine. The protein operates within amine and polyamine degradation; sarcosine degradation; formaldehyde and glycine from sarcosine: step 1/1. Functionally, catalyzes the last step of the oxidative degradation of choline to glycine. Converts sarcosine into glycine. The polypeptide is Sarcosine dehydrogenase, mitochondrial (Homo sapiens (Human)).